Here is a 142-residue protein sequence, read N- to C-terminus: HTH-type transcriptional regulator MntR (142 aa).

Positions 1-63 (MPTPSMEDYI…YEKYRGLVLT (63 aa)) constitute an HTH dtxR-type domain. Mn(2+)-binding residues include Asp8, Glu11, His77, Glu99, Glu102, and His103.

The protein belongs to the DtxR/MntR family. Homodimer.

It is found in the cytoplasm. Its activity is regulated as follows. DNA binding is strongly activated by Mn(2+). Its function is as follows. Central regulator of manganese homeostasis. This is HTH-type transcriptional regulator MntR from Bacillus cytotoxicus (strain DSM 22905 / CIP 110041 / 391-98 / NVH 391-98).